Here is a 417-residue protein sequence, read N- to C-terminus: NADH-quinone oxidoreductase subunit D (417 aa).

This sequence belongs to the complex I 49 kDa subunit family. In terms of assembly, NDH-1 is composed of 14 different subunits. Subunits NuoB, C, D, E, F, and G constitute the peripheral sector of the complex.

Its subcellular location is the cell inner membrane. It carries out the reaction a quinone + NADH + 5 H(+)(in) = a quinol + NAD(+) + 4 H(+)(out). NDH-1 shuttles electrons from NADH, via FMN and iron-sulfur (Fe-S) centers, to quinones in the respiratory chain. The immediate electron acceptor for the enzyme in this species is believed to be ubiquinone. Couples the redox reaction to proton translocation (for every two electrons transferred, four hydrogen ions are translocated across the cytoplasmic membrane), and thus conserves the redox energy in a proton gradient. This Verminephrobacter eiseniae (strain EF01-2) protein is NADH-quinone oxidoreductase subunit D.